A 304-amino-acid polypeptide reads, in one-letter code: UDP-3-O-acyl-N-acetylglucosamine deacetylase (304 aa).

Residues histidine 78, histidine 237, and aspartate 241 each contribute to the Zn(2+) site. Catalysis depends on histidine 264, which acts as the Proton donor.

Belongs to the LpxC family. Requires Zn(2+) as cofactor.

It catalyses the reaction a UDP-3-O-[(3R)-3-hydroxyacyl]-N-acetyl-alpha-D-glucosamine + H2O = a UDP-3-O-[(3R)-3-hydroxyacyl]-alpha-D-glucosamine + acetate. Its pathway is glycolipid biosynthesis; lipid IV(A) biosynthesis; lipid IV(A) from (3R)-3-hydroxytetradecanoyl-[acyl-carrier-protein] and UDP-N-acetyl-alpha-D-glucosamine: step 2/6. Functionally, catalyzes the hydrolysis of UDP-3-O-myristoyl-N-acetylglucosamine to form UDP-3-O-myristoylglucosamine and acetate, the committed step in lipid A biosynthesis. The sequence is that of UDP-3-O-acyl-N-acetylglucosamine deacetylase from Methylococcus capsulatus (strain ATCC 33009 / NCIMB 11132 / Bath).